The chain runs to 106 residues: Thioredoxin (106 aa).

The 106-residue stretch at 1–106 (GATVKVTNAT…RLAAFLDASL (106 aa)) folds into the Thioredoxin domain. The cysteines at positions 31 and 34 are disulfide-linked.

The protein belongs to the thioredoxin family.

Participates in various redox reactions through the reversible oxidation of its active center dithiol to a disulfide and catalyzes dithiol-disulfide exchange reactions. In Kitasatospora aureofaciens (Streptomyces aureofaciens), this protein is Thioredoxin (trxA).